A 428-amino-acid chain; its full sequence is 3-phosphoshikimate 1-carboxyvinyltransferase (428 aa).

3-phosphoshikimate-binding residues include Lys20, Ser21, and Arg25. Lys20 contacts phosphoenolpyruvate. Phosphoenolpyruvate-binding residues include Gly92 and Arg120. Residues Ser166, Gln168, Asp314, and Lys341 each contribute to the 3-phosphoshikimate site. Gln168 provides a ligand contact to phosphoenolpyruvate. Asp314 acts as the Proton acceptor in catalysis. Positions 345 and 387 each coordinate phosphoenolpyruvate.

This sequence belongs to the EPSP synthase family. Monomer.

It is found in the cytoplasm. It carries out the reaction 3-phosphoshikimate + phosphoenolpyruvate = 5-O-(1-carboxyvinyl)-3-phosphoshikimate + phosphate. The protein operates within metabolic intermediate biosynthesis; chorismate biosynthesis; chorismate from D-erythrose 4-phosphate and phosphoenolpyruvate: step 6/7. In terms of biological role, catalyzes the transfer of the enolpyruvyl moiety of phosphoenolpyruvate (PEP) to the 5-hydroxyl of shikimate-3-phosphate (S3P) to produce enolpyruvyl shikimate-3-phosphate and inorganic phosphate. This Listeria monocytogenes serovar 1/2a (strain ATCC BAA-679 / EGD-e) protein is 3-phosphoshikimate 1-carboxyvinyltransferase.